The primary structure comprises 374 residues: Glycerophosphodiester phosphodiesterase GDPD2 (374 aa).

The GP-PDE domain occupies 38 to 326 (FSVIGHRGIG…DFVEEIIEST (289 aa)). The disordered stretch occupies residues 330-349 (MIRPPPSSSPLPSPSKDDDV). Over residues 332–342 (RPPPSSSPLPS) the composition is skewed to pro residues.

This sequence belongs to the glycerophosphoryl diester phosphodiesterase family. Expressed in roots, shoots, flowers and siliques.

The enzyme catalyses a sn-glycero-3-phosphodiester + H2O = an alcohol + sn-glycerol 3-phosphate + H(+). This is Glycerophosphodiester phosphodiesterase GDPD2 from Arabidopsis thaliana (Mouse-ear cress).